The primary structure comprises 288 residues: Homoserine kinase (288 aa).

An ATP-binding site is contributed by 78–88; it reads PLARGLGSSSS.

It belongs to the GHMP kinase family. Homoserine kinase subfamily.

It localises to the cytoplasm. It carries out the reaction L-homoserine + ATP = O-phospho-L-homoserine + ADP + H(+). It participates in amino-acid biosynthesis; L-threonine biosynthesis; L-threonine from L-aspartate: step 4/5. Functionally, catalyzes the ATP-dependent phosphorylation of L-homoserine to L-homoserine phosphate. The polypeptide is Homoserine kinase (Streptococcus agalactiae serotype V (strain ATCC BAA-611 / 2603 V/R)).